We begin with the raw amino-acid sequence, 802 residues long: Penicillin G acylase (802 aa).

Residues methionine 1–glutamate 26 form the signal peptide. Position 177 (glutamate 177) interacts with Ca(2+). Positions serine 235–glycine 265 are cleaved as a propeptide — spacer peptide. Serine 266 (nucleophile) is an active-site residue. Aspartate 341 is a Ca(2+) binding site.

This sequence belongs to the peptidase S45 family. Heterodimer of an alpha subunit and a beta subunit processed from the same precursor. It depends on Ca(2+) as a cofactor.

It is found in the secreted. It catalyses the reaction a penicillin + H2O = 6-aminopenicillanate + a carboxylate. This Rhizobium viscosum (Arthrobacter viscosus) protein is Penicillin G acylase (pac).